The chain runs to 114 residues: Iron-sulfur cluster insertion protein ErpA (114 aa).

Residues cysteine 42, cysteine 106, and cysteine 108 each coordinate iron-sulfur cluster.

Belongs to the HesB/IscA family. In terms of assembly, homodimer. It depends on iron-sulfur cluster as a cofactor.

Required for insertion of 4Fe-4S clusters for at least IspG. The chain is Iron-sulfur cluster insertion protein ErpA from Proteus mirabilis (strain HI4320).